The sequence spans 270 residues: Short chain dehydrogenase/reductase dpfgG (270 aa).

7 residues coordinate NADP(+): I18, D69, N96, K130, K171, I200, and N204. Residue K171 is the Lowers pKa of active site Tyr of the active site.

This sequence belongs to the short-chain dehydrogenases/reductases (SDR) family.

Its pathway is secondary metabolite biosynthesis; terpenoid biosynthesis. Short chain dehydrogenase/reductase; part of the gene cluster that mediates the biosynthesis of diterpenoid pyrones. The first step of the pathway is the synthesis of the alpha-pyrone moiety by the polyketide synthase dpfgA via condensation of one acetyl-CoA starter unit with 3 malonyl-CoA units and 2 methylations. The alpha-pyrone is then combined with geranylgeranyl pyrophosphate (GGPP) formed by the GGPP synthase dpfgD through the action of the prenyltransferase dpfgC to yield a linear alpha-pyrone diterpenoid. Subsequent steps in the diterpenoid pyrone biosynthetic pathway involve the decalin core formation, which is initiated by the epoxidation of the C10-C11 olefin by the FAD-dependent oxidoreductase dpfgE, and is followed by a cyclization cascade catalyzed by the terpene cyclase dpfgB. The short chain dehydrogenase/reductase dpfgG then oxidizes the 8S hydroxy group to a ketone and the short chain dehydrogenase/reductase dpfgH reduces the ketone to the 8R hydroxy group to yield higginsianin B. Higginsianin B is further methylated by the methyltransferase dpfgI to produce the intermediate named FDDP B. The cytochrome P450 monooxygenase dfgpJ then catalyzes a three-step oxidation at C-27 to generate a carboxylic acid as well as C-26 hydroxylation. Finally, methyltransferase dpfgK methylates the carboxylic acid generated by dpfgJ, yielding the final diterpenoid pyrones from the pathway which were named FDDP D and FDDP E. In Gibberella zeae (strain ATCC MYA-4620 / CBS 123657 / FGSC 9075 / NRRL 31084 / PH-1) (Wheat head blight fungus), this protein is Short chain dehydrogenase/reductase dpfgG.